Reading from the N-terminus, the 341-residue chain is uncharacterized protein (341 aa).

The chain crosses the membrane as a helical span at residues 315 to 337 (VAAWFSGIAGGTFLALKLVSLMM).

Its subcellular location is the cell membrane. This is an uncharacterized protein from Bacillus subtilis (strain 168).